Here is a 144-residue protein sequence, read N- to C-terminus: Bacilliredoxin BCE_2233 (144 aa).

The protein belongs to the bacilliredoxin family.

This chain is Bacilliredoxin BCE_2233, found in Bacillus cereus (strain ATCC 10987 / NRS 248).